Here is a 163-residue protein sequence, read N- to C-terminus: Nucleotide-binding protein CJJ81176_0398 (163 aa).

The protein belongs to the YajQ family.

Functionally, nucleotide-binding protein. The chain is Nucleotide-binding protein CJJ81176_0398 from Campylobacter jejuni subsp. jejuni serotype O:23/36 (strain 81-176).